A 147-amino-acid chain; its full sequence is Ribosome maturation factor RimP (147 aa).

The protein belongs to the RimP family.

The protein localises to the cytoplasm. Its function is as follows. Required for maturation of 30S ribosomal subunits. This Sulfurihydrogenibium azorense (strain DSM 15241 / OCM 825 / Az-Fu1) protein is Ribosome maturation factor RimP.